A 456-amino-acid polypeptide reads, in one-letter code: High mobility group B protein 6 (456 aa).

Disordered regions lie at residues 1–42, 117–142, 238–258, and 349–389; these read MATN…KSAK, SSLTQAEQEKANKKKKKDCPETKRPS, AEQDNKKKNKKEKDPLKPKHP, and MLKK…YFLF. The span at 11–21 shows a compositional bias: basic residues; that stretch reads KKPRNSRKALK. A DNA-binding region (HMG box 1) is located at residues 138 to 206; that stretch reads TKRPSSSYVL…AYLQVIAKEK (69 aa). The span at 240-254 shows a compositional bias: basic and acidic residues; sequence QDNKKKNKKEKDPLK. Residues 255-321 constitute a DNA-binding region (HMG box 2); that stretch reads PKHPVSAFLV…TYLQAMEEYK (67 aa). Residues 354 to 363 show a composition bias toward basic and acidic residues; that stretch reads EKTDNLIKKE. The HMG box 3 DNA-binding region spans 379–447; the sequence is PKKPASSYFL…AYKKEVEAYN (69 aa).

The protein localises to the nucleus. In Arabidopsis thaliana (Mouse-ear cress), this protein is High mobility group B protein 6 (HMGB6).